We begin with the raw amino-acid sequence, 605 residues long: MTTGYESVPTSEPSDNLAPRAELWQRHLLEKKEGDQSISVSAFNISSMHNELSGLSEKSRQRVEAVWAAFSEASCSERKLALQGILNNCSSSLLSFASSTLDSLVRLDFLSLLPVEISFRILSFLDARSLCQAAQVSKHWKELADDDVIWHRMCEQHINRKCEKCGWGLPLLERNTLYAAKASIQKRYERLTKRGVDQAHESSPVKKAKLDDYPTSSNEETISSVKPPSPNSDSKFFLPFKTRPWKEVYAERCRVECNWRHGRCRQVVLSGHSDGVMCLQLVRNILASGSYDATIRLWNLATFQQVALLEGHSSGVTCLQFDQCKLISGSMDKTIRIWNYRTSECISILHGHTDSVLCLTFDSTLLVSGSADCTVKLWHFSGGKRITLRGHTGPVNSVRIIRDRGLVLSGSDDSTIKIWSLETNTCLHTFSAHIGPVQSLALADSRLFSCSLDGTIKQWDIEKKKCVHTLFGHIEGVWEIAADHLRLISGAHDGVVKVWEACECVHTLKNHSEPVTSVALGDCEVVSGSEDGKIYLWLFNNAPNESPVSTQSVPISSLNGQRSNSSVQRALSSVPNYSSSLSNISTRNLNIPPSNANNDDVSIQS.

Residues 107-153 (LDFLSLLPVEISFRILSFLDARSLCQAAQVSKHWKELADDDVIWHRM) form the F-box domain. Over residues 195–212 (GVDQAHESSPVKKAKLDD) the composition is skewed to basic and acidic residues. Residues 195-231 (GVDQAHESSPVKKAKLDDYPTSSNEETISSVKPPSPN) form a disordered region. The segment covering 214–231 (PTSSNEETISSVKPPSPN) has biased composition (polar residues). Serine 229 and serine 232 each carry phosphoserine. WD repeat units lie at residues 271-299 (GHSD…RLWN), 311-339 (GHSS…RIWN), 350-379 (HGHT…KLWH), 390-420 (GHTG…KIWS), 432-460 (AHIG…KQWD), 472-500 (GHIE…KVWE), and 510-538 (NHSE…YLWL).

As to quaternary structure, a part of the E3 ubiquitin ligase Skp1-Cullin-1-F-box (SCF) complex. Interacts with cul1, skp1 and phosphorylated zip1.

The protein resides in the nucleus. Its function is as follows. Probably recognizes and binds to some phosphorylated proteins and promotes their ubiquitination and degradation. Required for the inactivation of zip1 via ubiquitination. The sequence is that of F-box/WD repeat-containing protein pof1 (pof1) from Schizosaccharomyces pombe (strain 972 / ATCC 24843) (Fission yeast).